A 799-amino-acid polypeptide reads, in one-letter code: High affinity nerve growth factor receptor (799 aa).

The N-terminal stretch at 1-33 (MLRGQRLGQLGWHRPAAGLGSLMTSLMLACASA) is a signal peptide. Residues 34 to 420 (ASCREVCCPV…VEKKDETPFG (387 aa)) lie on the Extracellular side of the membrane. Cystine bridges form between cysteine 36–cysteine 41 and cysteine 40–cysteine 50. N-linked (GlcNAc...) asparagine glycosylation is present at asparagine 67. LRR repeat units lie at residues 90-113 (LGEL…AFRF) and 116-137 (RLSH…TVQG). N-linked (GlcNAc...) asparagine glycosylation is found at asparagine 121, asparagine 190, asparagine 204, asparagine 255, asparagine 264, asparagine 320, asparagine 325, asparagine 341, asparagine 361, and asparagine 404. The region spanning 148–219 (NPLHCSCALF…GDDVFLQCQV (72 aa)) is the LRRCT domain. A disulfide bond links cysteine 154 and cysteine 193. 2 consecutive Ig-like C2-type domains span residues 196–285 (PTVK…VSVS) and 205–368 (DSVE…LAAN). Disulfide bonds link cysteine 217–cysteine 267 and cysteine 302–cysteine 348. Residues 421–441 (VSVAVGLAVSAALFLSALLLV) traverse the membrane as a helical segment. The Cytoplasmic segment spans residues 442–799 (LNKCGQRSKF…APPSYLDVLG (358 aa)). The interaction with SQSTM1 stretch occupies residues 472 to 493 (MTLGGSSLSPTEGKGSGLQGHI). Position 499 is a phosphotyrosine; by autocatalysis (tyrosine 499). The Protein kinase domain maps to 513–784 (IILKWELGEG…LSMKDVHARL (272 aa)). ATP is bound by residues 519 to 527 (LGEGAFGKV) and lysine 547. Residue aspartate 653 is the Proton acceptor of the active site. Tyrosine 679, tyrosine 683, tyrosine 684, and tyrosine 794 each carry phosphotyrosine; by autocatalysis.

Belongs to the protein kinase superfamily. Tyr protein kinase family. Insulin receptor subfamily. Exists in a dynamic equilibrium between monomeric (low affinity) and dimeric (high affinity) structures. Homodimerization is induced by binding of a NGF dimer. Found in a complex, at least composed of KIDINS220, MAGI2, NTRK1 and RAPGEF2; the complex is mainly formed at late endosomes in a nerve growth factor (NGF)-dependent manner. Interacts with RAPGEF2; the interaction is strengthened after NGF stimulation. Interacts with SQSTM1; bridges NTRK1 to NGFR. Forms a ternary complex with NGFR and KIDINS220; this complex is affected by the expression levels of KIDINS220 and an increase in KIDINS220 expression leads to a decreased association of NGFR and NTRK1. Interacts (phosphorylated upon activation by NGF) with SHC1; mediates SHC1 phosphorylation and activation. Interacts (phosphorylated upon activation by NGF) with PLCG1; mediates PLCG1 phosphorylation and activation. Interacts (phosphorylated) with SH2B1 and SH2B2. Interacts with GRB2. Interacts with PIK3R1. Interacts with FRS2. Interacts with SORT1; may regulate NTRK1 anterograde axonal transport. Interacts with SH2D1A; regulates NTRK1. Interacts with NRADD. Interacts with RAB7A. Interacts with PTPRS. Interacts with USP36; USP36 does not deubiquitinate NTRK1. Interacts with GGA3. Interacts with TSPAN1; this interaction promotes NTRK1 stability. Ligand-mediated autophosphorylation. Interaction with SQSTM1 is phosphotyrosine-dependent. Autophosphorylation at Tyr-499 mediates interaction and phosphorylation of SHC1. In terms of processing, N-glycosylated. Post-translationally, ubiquitinated. Undergoes polyubiquitination upon activation; regulated by NGFR. Ubiquitination by NEDD4L leads to degradation. Ubiquitination regulates the internalization of the receptor.

Its subcellular location is the cell membrane. The protein localises to the early endosome membrane. It localises to the late endosome membrane. It is found in the recycling endosome membrane. The enzyme catalyses L-tyrosyl-[protein] + ATP = O-phospho-L-tyrosyl-[protein] + ADP + H(+). With respect to regulation, the pro-survival signaling effect of NTRK1 in neurons requires its endocytosis into signaling early endosomes and its retrograde axonal transport. This is regulated by different proteins including CFL1, RAC1 and SORT1. NTF3 is unable to induce this signaling probably due to the lability of the NTF3-NTRK1 complex in endosomes. SH2D1A inhibits the autophosphorylation of the receptor, and alters the recruitment and activation of downstream effectors and signaling cascades. Regulated by NGFR. In terms of biological role, receptor tyrosine kinase involved in the development and the maturation of the central and peripheral nervous systems through regulation of proliferation, differentiation and survival of sympathetic and nervous neurons. High affinity receptor for NGF which is its primary ligand, it can also bind and be activated by NTF3/neurotrophin-3. However, NTF3 only supports axonal extension through NTRK1 but has no effect on neuron survival. Upon dimeric NGF ligand-binding, undergoes homodimerization, autophosphorylation and activation. Recruits, phosphorylates and/or activates several downstream effectors including SHC1, FRS2, SH2B1, SH2B2 and PLCG1 that regulate distinct overlapping signaling cascades driving cell survival and differentiation. Through SHC1 and FRS2 activates a GRB2-Ras-MAPK cascade that regulates cell differentiation and survival. Through PLCG1 controls NF-Kappa-B activation and the transcription of genes involved in cell survival. Through SHC1 and SH2B1 controls a Ras-PI3 kinase-AKT1 signaling cascade that is also regulating survival. In absence of ligand and activation, may promote cell death, making the survival of neurons dependent on trophic factors. The chain is High affinity nerve growth factor receptor (Ntrk1) from Mus musculus (Mouse).